The chain runs to 210 residues: MTEVQKLTNNKEVIAYLVEKFPLCFSLEGEAKPLKIGLFQDLAEALQDDERVSKTQLRQALRAYTSNWRYLHGCKAGAERVDLQGNVCGILEQEHAEHAAQQLAEAKAKVAAMRAAEKAAKPEKKRPARRVAAKGQHAKETTTNKAKVTRKPKVILNAIELASLQKGDSVKVKVGESAKKAIVLEVVKDSARVQLENGLVITVTAEHLFA.

The tract at residues 118 to 146 (KAAKPEKKRPARRVAAKGQHAKETTTNKA) is disordered. Basic residues predominate over residues 123–132 (EKKRPARRVA).

The protein belongs to the ProQ family.

It is found in the cytoplasm. In terms of biological role, RNA chaperone with significant RNA binding, RNA strand exchange and RNA duplexing activities. The polypeptide is RNA chaperone ProQ (Pasteurella multocida (strain Pm70)).